A 463-amino-acid chain; its full sequence is Glutamate--tRNA ligase 1 (463 aa).

Positions 10 to 20 match the 'HIGH' region motif; the sequence is PSPTGYLHIGG. Residues 238 to 242 carry the 'KMSKS' region motif; that stretch reads KLSKR. K241 is an ATP binding site.

The protein belongs to the class-I aminoacyl-tRNA synthetase family. Glutamate--tRNA ligase type 1 subfamily. As to quaternary structure, monomer.

Its subcellular location is the cytoplasm. The enzyme catalyses tRNA(Glu) + L-glutamate + ATP = L-glutamyl-tRNA(Glu) + AMP + diphosphate. Functionally, catalyzes the attachment of glutamate to tRNA(Glu) in a two-step reaction: glutamate is first activated by ATP to form Glu-AMP and then transferred to the acceptor end of tRNA(Glu). This is Glutamate--tRNA ligase 1 from Helicobacter pylori (strain HPAG1).